Here is a 437-residue protein sequence, read N- to C-terminus: Protein farnesyltransferase subunit beta (437 aa).

PFTB repeat units lie at residues 123 to 164, 174 to 215, 222 to 263, 270 to 312, and 332 to 374; these read ATDV…CIIG, REKL…SLTN, FEGT…VILK, LKSL…PLLH, and QQAL…SIAQ. Residues 248–251 and 291–294 contribute to the (2E,6E)-farnesyl diphosphate site; these read HGGY and RCNK. D297 and C299 together coordinate Zn(2+). (2E,6E)-farnesyl diphosphate is bound at residue 300–303; that stretch reads YSFW. H362 provides a ligand contact to Zn(2+). Phosphoserine is present on S432. T436 carries the phosphothreonine modification.

This sequence belongs to the protein prenyltransferase subunit beta family. In terms of assembly, heterodimer of FNTA and FNTB. The cofactor is Zn(2+).

It catalyses the reaction L-cysteinyl-[protein] + (2E,6E)-farnesyl diphosphate = S-(2E,6E)-farnesyl-L-cysteinyl-[protein] + diphosphate. Its function is as follows. Essential subunit of the farnesyltransferase complex. Catalyzes the transfer of a farnesyl moiety from farnesyl diphosphate to a cysteine at the fourth position from the C-terminus of several proteins having the C-terminal sequence Cys-aliphatic-aliphatic-X. The polypeptide is Protein farnesyltransferase subunit beta (Fntb) (Mus musculus (Mouse)).